We begin with the raw amino-acid sequence, 267 residues long: NH(3)-dependent NAD(+) synthetase (267 aa).

Residue 38–45 coordinates ATP; that stretch reads GISGGVDS. Asp44 contributes to the Mg(2+) binding site. Arg123 is a deamido-NAD(+) binding site. Thr143 serves as a coordination point for ATP. Glu148 is a Mg(2+) binding site. Positions 156 and 163 each coordinate deamido-NAD(+). Positions 172 and 193 each coordinate ATP. 250–251 provides a ligand contact to deamido-NAD(+); the sequence is HK.

It belongs to the NAD synthetase family. In terms of assembly, homodimer.

The catalysed reaction is deamido-NAD(+) + NH4(+) + ATP = AMP + diphosphate + NAD(+) + H(+). It participates in cofactor biosynthesis; NAD(+) biosynthesis; NAD(+) from deamido-NAD(+) (ammonia route): step 1/1. Catalyzes the ATP-dependent amidation of deamido-NAD to form NAD. Uses ammonia as a nitrogen source. In Pyrobaculum aerophilum (strain ATCC 51768 / DSM 7523 / JCM 9630 / CIP 104966 / NBRC 100827 / IM2), this protein is NH(3)-dependent NAD(+) synthetase.